The chain runs to 144 residues: 3-dehydroquinate dehydratase (144 aa).

Tyrosine 24 functions as the Proton acceptor in the catalytic mechanism. Substrate is bound by residues asparagine 76, histidine 82, and aspartate 89. The active-site Proton donor is histidine 102. Residues 103–104 (LS) and arginine 113 contribute to the substrate site.

It belongs to the type-II 3-dehydroquinase family. In terms of assembly, homododecamer.

It carries out the reaction 3-dehydroquinate = 3-dehydroshikimate + H2O. It functions in the pathway metabolic intermediate biosynthesis; chorismate biosynthesis; chorismate from D-erythrose 4-phosphate and phosphoenolpyruvate: step 3/7. In terms of biological role, catalyzes a trans-dehydration via an enolate intermediate. This Bordetella bronchiseptica (strain ATCC BAA-588 / NCTC 13252 / RB50) (Alcaligenes bronchisepticus) protein is 3-dehydroquinate dehydratase.